A 126-amino-acid chain; its full sequence is Large ribosomal subunit protein bL19 (126 aa).

Belongs to the bacterial ribosomal protein bL19 family.

Its function is as follows. This protein is located at the 30S-50S ribosomal subunit interface and may play a role in the structure and function of the aminoacyl-tRNA binding site. In Albidiferax ferrireducens (strain ATCC BAA-621 / DSM 15236 / T118) (Rhodoferax ferrireducens), this protein is Large ribosomal subunit protein bL19.